The primary structure comprises 141 residues: Hemoglobin subunit alpha (141 aa).

In terms of domain architecture, Globin spans Val1–Arg141. Ser3 carries the phosphoserine modification. An N6-succinyllysine modification is found at Lys7. Thr8 carries the phosphothreonine modification. An N6-succinyllysine modification is found at Lys11. Lys16 is subject to N6-acetyllysine; alternate. Residue Lys16 is modified to N6-succinyllysine; alternate. Position 24 is a phosphotyrosine (Tyr24). At Ser35 the chain carries Phosphoserine. Lys40 is modified (N6-succinyllysine). The residue at position 49 (Ser49) is a Phosphoserine. His58 contributes to the O2 binding site. His87 serves as a coordination point for heme b. Ser102 carries the post-translational modification Phosphoserine. Thr108 carries the phosphothreonine modification. A Phosphoserine modification is found at Ser124. Residues Thr134 and Thr137 each carry the phosphothreonine modification. Position 138 is a phosphoserine (Ser138).

This sequence belongs to the globin family. As to quaternary structure, heterotetramer of two alpha chains and two beta chains. As to expression, red blood cells.

Its function is as follows. Involved in oxygen transport from the lung to the various peripheral tissues. This is Hemoglobin subunit alpha from Tamias merriami (Merriam's chipmunk).